The chain runs to 126 residues: Fluoride-specific ion channel FluC (126 aa).

4 helical membrane-spanning segments follow: residues 4–24 (LLLV…TSAW), 36–56 (GTLL…TASL), 67–85 (LFLA…SFNY), and 101–121 (AYLL…TLLV). Na(+) contacts are provided by Gly75 and Thr78.

Belongs to the fluoride channel Fluc/FEX (TC 1.A.43) family.

It localises to the cell inner membrane. It carries out the reaction fluoride(in) = fluoride(out). Its activity is regulated as follows. Na(+) is not transported, but it plays an essential structural role and its presence is essential for fluoride channel function. Fluoride-specific ion channel. Important for reducing fluoride concentration in the cell, thus reducing its toxicity. This chain is Fluoride-specific ion channel FluC, found in Anaeromyxobacter dehalogenans (strain 2CP-1 / ATCC BAA-258).